The primary structure comprises 190 residues: Segregation and condensation protein B (190 aa).

It belongs to the ScpB family. As to quaternary structure, homodimer. Homodimerization may be required to stabilize the binding of ScpA to the Smc head domains. Component of a cohesin-like complex composed of ScpA, ScpB and the Smc homodimer, in which ScpA and ScpB bind to the head domain of Smc. The presence of the three proteins is required for the association of the complex with DNA.

The protein resides in the cytoplasm. Its function is as follows. Participates in chromosomal partition during cell division. May act via the formation of a condensin-like complex containing Smc and ScpA that pull DNA away from mid-cell into both cell halves. The protein is Segregation and condensation protein B of Bacillus cereus (strain ATCC 14579 / DSM 31 / CCUG 7414 / JCM 2152 / NBRC 15305 / NCIMB 9373 / NCTC 2599 / NRRL B-3711).